We begin with the raw amino-acid sequence, 475 residues long: Ribulose bisphosphate carboxylase large chain (475 aa).

Positions 1–2 (MS) are excised as a propeptide. An N-acetylproline modification is found at Pro3. Position 14 is an N6,N6,N6-trimethyllysine (Lys14). 2 residues coordinate substrate: Asn123 and Thr173. The Proton acceptor role is filled by Lys175. Lys177 provides a ligand contact to substrate. Residues Lys201, Asp203, and Glu204 each coordinate Mg(2+). Residue Lys201 is modified to N6-carboxylysine. His294 serves as the catalytic Proton acceptor. Substrate is bound by residues Arg295, His327, and Ser379.

The protein belongs to the RuBisCO large chain family. Type I subfamily. As to quaternary structure, heterohexadecamer of 8 large chains and 8 small chains; disulfide-linked. The disulfide link is formed within the large subunit homodimers. The cofactor is Mg(2+). Post-translationally, the disulfide bond which can form in the large chain dimeric partners within the hexadecamer appears to be associated with oxidative stress and protein turnover.

It localises to the plastid. The protein resides in the chloroplast. The enzyme catalyses 2 (2R)-3-phosphoglycerate + 2 H(+) = D-ribulose 1,5-bisphosphate + CO2 + H2O. It catalyses the reaction D-ribulose 1,5-bisphosphate + O2 = 2-phosphoglycolate + (2R)-3-phosphoglycerate + 2 H(+). RuBisCO catalyzes two reactions: the carboxylation of D-ribulose 1,5-bisphosphate, the primary event in carbon dioxide fixation, as well as the oxidative fragmentation of the pentose substrate in the photorespiration process. Both reactions occur simultaneously and in competition at the same active site. In Staurastrum punctulatum (Green alga), this protein is Ribulose bisphosphate carboxylase large chain.